The primary structure comprises 125 residues: Ribosome-binding factor A (125 aa).

The protein belongs to the RbfA family. In terms of assembly, monomer. Binds 30S ribosomal subunits, but not 50S ribosomal subunits or 70S ribosomes.

The protein localises to the cytoplasm. One of several proteins that assist in the late maturation steps of the functional core of the 30S ribosomal subunit. Associates with free 30S ribosomal subunits (but not with 30S subunits that are part of 70S ribosomes or polysomes). Required for efficient processing of 16S rRNA. May interact with the 5'-terminal helix region of 16S rRNA. This Akkermansia muciniphila (strain ATCC BAA-835 / DSM 22959 / JCM 33894 / BCRC 81048 / CCUG 64013 / CIP 107961 / Muc) protein is Ribosome-binding factor A.